Consider the following 185-residue polypeptide: ATP synthase subunit delta (185 aa).

It belongs to the ATPase delta chain family. As to quaternary structure, F-type ATPases have 2 components, F(1) - the catalytic core - and F(0) - the membrane proton channel. F(1) has five subunits: alpha(3), beta(3), gamma(1), delta(1), epsilon(1). F(0) has three main subunits: a(1), b(2) and c(10-14). The alpha and beta chains form an alternating ring which encloses part of the gamma chain. F(1) is attached to F(0) by a central stalk formed by the gamma and epsilon chains, while a peripheral stalk is formed by the delta and b chains.

It is found in the cell inner membrane. F(1)F(0) ATP synthase produces ATP from ADP in the presence of a proton or sodium gradient. F-type ATPases consist of two structural domains, F(1) containing the extramembraneous catalytic core and F(0) containing the membrane proton channel, linked together by a central stalk and a peripheral stalk. During catalysis, ATP synthesis in the catalytic domain of F(1) is coupled via a rotary mechanism of the central stalk subunits to proton translocation. Functionally, this protein is part of the stalk that links CF(0) to CF(1). It either transmits conformational changes from CF(0) to CF(1) or is implicated in proton conduction. This Gemmatimonas aurantiaca (strain DSM 14586 / JCM 11422 / NBRC 100505 / T-27) protein is ATP synthase subunit delta.